The following is a 123-amino-acid chain: Large ribosomal subunit protein bL12 (123 aa).

Belongs to the bacterial ribosomal protein bL12 family. As to quaternary structure, homodimer. Part of the ribosomal stalk of the 50S ribosomal subunit. Forms a multimeric L10(L12)X complex, where L10 forms an elongated spine to which 2 to 4 L12 dimers bind in a sequential fashion. Binds GTP-bound translation factors.

Forms part of the ribosomal stalk which helps the ribosome interact with GTP-bound translation factors. Is thus essential for accurate translation. This is Large ribosomal subunit protein bL12 from Neisseria gonorrhoeae (strain NCCP11945).